A 111-amino-acid chain; its full sequence is Large ribosomal subunit protein P2-2 (111 aa).

The segment at Ala86 to Asp111 is disordered.

The protein belongs to the eukaryotic ribosomal protein P1/P2 family. P1 and P2 exist as dimers at the large ribosomal subunit. Post-translationally, phosphorylated.

Functionally, plays an important role in the elongation step of protein synthesis. The sequence is that of Large ribosomal subunit protein P2-2 (LIP') from Leishmania infantum.